The primary structure comprises 129 residues: Lysozyme C-3 (129 aa).

Residues 1–129 (KVYERCELAA…VSRWIRGCRL (129 aa)) enclose the C-type lysozyme domain. Disulfide bonds link C6–C127, C30–C115, C64–C80, and C76–C94. Residues E35 and D52 contribute to the active site.

The protein belongs to the glycosyl hydrolase 22 family.

The protein localises to the secreted. The catalysed reaction is Hydrolysis of (1-&gt;4)-beta-linkages between N-acetylmuramic acid and N-acetyl-D-glucosamine residues in a peptidoglycan and between N-acetyl-D-glucosamine residues in chitodextrins.. Lysozymes have primarily a bacteriolytic function; those in tissues and body fluids are associated with the monocyte-macrophage system and enhance the activity of immunoagents. The chain is Lysozyme C-3 from Anas platyrhynchos (Mallard).